A 373-amino-acid polypeptide reads, in one-letter code: Extensin-1 (373 aa).

The first 19 residues, 1–19, serve as a signal peptide directing secretion; the sequence is MASFLVLAFSLAFVSQTTA. 36 consecutive repeat copies span residues 25–33, 34–40, 41–49, 50–56, 57–65, 66–72, 73–81, 82–88, 97–105, 106–112, 113–121, 122–128, 129–137, 138–144, 145–153, 154–160, 161–169, 170–176, 177–185, 186–192, 193–201, 202–208, 209–217, 218–224, 225–233, 234–240, 241–248, 249–256, 257–264, 265–272, 273–280, 281–288, 289–296, 297–304, 305–312, and 313–320. A 13 X 9 AA repeats of S-P-P-P-P-V-K-[HY]-Y region spans residues 25–233; it reads SPPPPVKHYS…KSPPPPVKYY (209 aa). A 13 X 7 AA repeats of S-P-P-P-V-Y-K region spans residues 34–240; sequence SPPPVYKSPP…KYYSPPPVYK (207 aa). Positions 241-312 are 5 X 8 AA repeats of S-P-P-P-P-V-H-Y; that stretch reads SPPPPVHYSP…YHSPPPPVHY (72 aa). The interval 249–320 is 5 X 8 AA repeats of S-P-P-P-V-V-Y-H; that stretch reads SPPPVVYHSP…HYSPPPVVYH (72 aa). 2 isodityrosine cross-linking regions span residues 329-332 and 363-366; these read YEYK and YLYK. Positions 349-373 are disordered; the sequence is PPPPVHHYSPPHQPYLYKSPPPPHY.

The protein belongs to the extensin family. Extensins contain a characteristic repeat of the pentapeptide Ser-Pro(4). For this particular extensin, a typical repeat of Ser-Pro(3) is found. In both cases, the proline residues are hydroxylated and then O-glycosylated (arabinosylation). In terms of processing, synthetised as soluble proteins which become insolubilised in the cell wall through the intermolecular cross-linking of Tyr on adjacent monomers. Isodityrosine (IDT) stabilizes and makes rigid the part of the polypeptide where IDT functional sites are present. In terms of tissue distribution, predominantly expressed in the roots. Not detected in the leaves, nor in flowers or flower buds. Wounding reverses this pattern, turning on the gene in the leaves and repressing it in the roots.

The protein resides in the secreted. Its subcellular location is the primary cell wall. In terms of biological role, structural component which strengthens the primary cell wall. This Arabidopsis thaliana (Mouse-ear cress) protein is Extensin-1.